The primary structure comprises 241 residues: DNA repair protein RecO (241 aa).

Belongs to the RecO family.

Involved in DNA repair and RecF pathway recombination. This Orientia tsutsugamushi (strain Ikeda) (Rickettsia tsutsugamushi) protein is DNA repair protein RecO.